A 621-amino-acid polypeptide reads, in one-letter code: KIF-binding protein (621 aa).

The tract at residues G51–G75 is disordered. Residues P54–D65 are compositionally biased toward acidic residues. Phosphoserine is present on S178.

This sequence belongs to the KIF-binding protein family. In terms of assembly, interacts with KIF1B; positively regulates KIF1B microtubule motor activity. Interacts with STMN2. In terms of tissue distribution, highly expressed in heart, brain, ovary, testis, spinal cord and all specific brain regions examined. Moderate expressed at intermediate level in all other adult tissues examined, as well as in fetal liver and brain. Not expressed in blood leukocytes.

The protein resides in the cytoplasm. It localises to the cytoskeleton. Activator of KIF1B plus-end-directed microtubule motor activity. Required for organization of axonal microtubules, and axonal outgrowth and maintenance during peripheral and central nervous system development. This is KIF-binding protein from Homo sapiens (Human).